A 245-amino-acid chain; its full sequence is Homeobox protein goosecoid (245 aa).

A DNA-binding region (homeobox) is located at residues 150 to 209 (KRRHRTIFTDEQLEALENLFQETKYPDVGTREQLARKVHLREEKVEVWFKNRRAKWRRQK). Residues 203-245 (AKWRRQKRSSSEESENAQKWNKASKTSPEKRQEDGKSDLDSDS) form a disordered region. Over residues 219 to 228 (AQKWNKASKT) the composition is skewed to polar residues. Residues 229 to 245 (SPEKRQEDGKSDLDSDS) show a composition bias toward basic and acidic residues.

The protein belongs to the paired homeobox family. Bicoid subfamily.

The protein localises to the nucleus. Its function is as follows. Involved in the development of the organizer region in the gastrula (Hensen node in chicken). This is Homeobox protein goosecoid (GSC) from Gallus gallus (Chicken).